Reading from the N-terminus, the 493-residue chain is Leucine-rich repeat-containing protein 14 (493 aa).

The LRR 1; degenerate repeat unit spans residues 111–146 (KHTLRVLDMTGLLDDGVEQDPGTMSMWDCTAAVART). Residues 194–218 (RLCCRDLRAEDLPMRNTVALLQLLD) form an LRR 2; degenerate repeat. An LRR 3; degenerate repeat occupies 219-246 (AGCLRRIDLRFNNLGLRGLSVIIPHVAR). An LRR 4; degenerate repeat occupies 247 to 282 (FQHLASLRLHYVHGDSRQPSVDGEDNFRYFLAQMGR). 5 LRR repeats span residues 283 to 307 (FICLRELSIGSSLLSGRLDQLLSTL), 308 to 339 (QRPLESLELAFCALLPEDLRFLAQSSHAAHLK), 340 to 360 (KLDLSGNDLSGNQLTPFQGLL), 364 to 391 (AATLLHLELTECQIADAQLLATLPTLTR), and 392 to 416 (CASLRYLGLYGNPLSMAGLKELLRD).

It belongs to the PRAME family. LRRC14 subfamily. As to quaternary structure, interacts with IKBKB; disrupts IKBKB-IKBKG interaction preventing I-kappa-B-kinase (IKK) core complex formation and leading to a decrease of IKBKB phosphorylation and NF-kappaB activation. Interacts with CHUK.

The protein resides in the cytoplasm. In terms of biological role, negatively regulates Toll-like receptor-mediated NF-kappa-B signaling by disrupting IKK core complex formation through interaction with IKBKB. The chain is Leucine-rich repeat-containing protein 14 from Rattus norvegicus (Rat).